The primary structure comprises 204 residues: Guanine-specific ADP-ribosyl transferase (204 aa).

A signal peptide spans 1-42 (MITTSLRRRTAAAVLSLSAVLATTAATAPGAAPAPSAAPAKA). The cysteines at positions 46 and 76 are disulfide-linked. Residues 81–85 (RSDSR) and Lys98 each bind NADH. GDP-binding positions include 111–114 (VLVN), 132–134 (WYK), Trp159, and Gln162. The PN (phosphate-nicotinamide) loop motif lies at 132-136 (WYKSG). Cys180 and Cys194 are oxidised to a cystine.

Belongs to the pierisin ADP-ribosyltransferase family. Monomer.

The protein localises to the secreted. It catalyses the reaction guanosine + NAD(+) = N(2)-(ADP-D-ribosyl)-guanosine + nicotinamide + H(+). It carries out the reaction a 2'-deoxyguanosine in DNA + NAD(+) = an N(2)-(ADP-L-ribosyl)-2'-deoxyguanosine in DNA + nicotinamide + H(+). The catalysed reaction is 2'-deoxyguanosine + NAD(+) = N(2)-(ADP-D-ribosyl)-2'-deoxyguanosine + nicotinamide + H(+). The enzyme catalyses GMP + NAD(+) = N(2)-(ADP-D-ribosyl)-GMP + nicotinamide + H(+). It catalyses the reaction GTP + NAD(+) = N(2)-(ADP-D-ribosyl)-GTP + nicotinamide + H(+). It carries out the reaction dGMP + NAD(+) = N(2)-(ADP-D-ribosyl)-dGMP + nicotinamide + H(+). The catalysed reaction is dGTP + NAD(+) = N(2)-(ADP-D-ribosyl)-dGTP + nicotinamide + H(+). The enzyme catalyses 3',5'-cyclic GMP + NAD(+) = N(2)-(ADP-D-ribosyl)-3',5'-cyclic GMP + nicotinamide + H(+). It catalyses the reaction guanine + NAD(+) = N(2)-(ADP-D-ribosyl)-guanine + nicotinamide + H(+). It carries out the reaction GDP + NAD(+) = N(2)-(ADP-D-ribosyl)-GDP + nicotinamide + H(+). Its activity is regulated as follows. Inhibited by NADH. Its function is as follows. ADP-ribosylates the N2 amino group of guanosine, deoxyguanosine, GMP, dGMP, cGMP, GTP and dGTP; oligo-guanosine, oligo-deoxyguanosine and tRNA are ADP-ribosylated less efficiently, while dsDNA is a very poor substrate. Also acts on GDP. This Streptomyces coelicolor (strain ATCC BAA-471 / A3(2) / M145) protein is Guanine-specific ADP-ribosyl transferase.